The following is a 397-amino-acid chain: Elongation factor Tu (397 aa).

One can recognise a tr-type G domain in the interval 10-207 (KPHVNIGTIG…VLDEYVKEPV (198 aa)). A G1 region spans residues 19–26 (GHIDHGKT). Residue 19–26 (GHIDHGKT) coordinates GTP. Position 26 (threonine 26) interacts with Mg(2+). The tract at residues 60–64 (GITIS) is G2. Residues 81–84 (DCPG) form a G3 region. Residues 81 to 85 (DCPGH) and 136 to 139 (NKCD) each bind GTP. The segment at 136 to 139 (NKCD) is G4. The segment at 174–176 (SAL) is G5.

The protein belongs to the TRAFAC class translation factor GTPase superfamily. Classic translation factor GTPase family. EF-Tu/EF-1A subfamily. In terms of assembly, monomer.

The protein localises to the cytoplasm. It catalyses the reaction GTP + H2O = GDP + phosphate + H(+). Functionally, GTP hydrolase that promotes the GTP-dependent binding of aminoacyl-tRNA to the A-site of ribosomes during protein biosynthesis. This is Elongation factor Tu from Desulforapulum autotrophicum (strain ATCC 43914 / DSM 3382 / VKM B-1955 / HRM2) (Desulfobacterium autotrophicum).